The sequence spans 198 residues: Ribonuclease HII (198 aa).

In terms of domain architecture, RNase H type-2 spans 10 to 198 (QLVAGVDEVG…PVKRALGLAS (189 aa)). The a divalent metal cation site is built by Asp-16, Glu-17, and Asp-108.

The protein belongs to the RNase HII family. Mn(2+) serves as cofactor. Requires Mg(2+) as cofactor.

It is found in the cytoplasm. The catalysed reaction is Endonucleolytic cleavage to 5'-phosphomonoester.. Its function is as follows. Endonuclease that specifically degrades the RNA of RNA-DNA hybrids. This chain is Ribonuclease HII, found in Escherichia fergusonii (strain ATCC 35469 / DSM 13698 / CCUG 18766 / IAM 14443 / JCM 21226 / LMG 7866 / NBRC 102419 / NCTC 12128 / CDC 0568-73).